Reading from the N-terminus, the 313-residue chain is 2,3-dihydroxyphenylpropionate/2,3-dihydroxicinnamic acid 1,2-dioxygenase (313 aa).

Histidine 116 acts as the Proton donor in catalysis. Histidine 180 (proton acceptor) is an active-site residue.

The protein belongs to the LigB/MhpB extradiol dioxygenase family. As to quaternary structure, homotetramer. Fe(2+) is required as a cofactor.

The catalysed reaction is 3-(2,3-dihydroxyphenyl)propanoate + O2 = (2Z,4E)-2-hydroxy-6-oxonona-2,4-dienedioate + H(+). It catalyses the reaction (2E)-3-(2,3-dihydroxyphenyl)prop-2-enoate + O2 = (2Z,4E,7E)-2-hydroxy-6-oxonona-2,4,7-trienedioate + H(+). It functions in the pathway aromatic compound metabolism; 3-phenylpropanoate degradation. In terms of biological role, catalyzes the non-heme iron(II)-dependent oxidative cleavage of 2,3-dihydroxyphenylpropionic acid and 2,3-dihydroxicinnamic acid into 2-hydroxy-6-ketononadienedioate and 2-hydroxy-6-ketononatrienedioate, respectively. The protein is 2,3-dihydroxyphenylpropionate/2,3-dihydroxicinnamic acid 1,2-dioxygenase of Mycobacterium sp. (strain MCS).